Here is a 102-residue protein sequence, read N- to C-terminus: Large ribosomal subunit protein bL28 (102 aa).

The span at 1-20 shows a compositional bias: polar residues; it reads MSNSCDLTGHGWQNGNMVSH. The segment at 1–27 is disordered; it reads MSNSCDLTGHGWQNGNMVSHSNRKTKK.

Belongs to the bacterial ribosomal protein bL28 family.

The sequence is that of Large ribosomal subunit protein bL28 from Neorickettsia sennetsu (strain ATCC VR-367 / Miyayama) (Ehrlichia sennetsu).